The primary structure comprises 458 residues: UDP-N-acetylmuramate--L-alanine ligase (458 aa).

Residue 118–124 (GTHGKTT) coordinates ATP.

This sequence belongs to the MurCDEF family.

Its subcellular location is the cytoplasm. It catalyses the reaction UDP-N-acetyl-alpha-D-muramate + L-alanine + ATP = UDP-N-acetyl-alpha-D-muramoyl-L-alanine + ADP + phosphate + H(+). It participates in cell wall biogenesis; peptidoglycan biosynthesis. In terms of biological role, cell wall formation. The sequence is that of UDP-N-acetylmuramate--L-alanine ligase from Clostridium botulinum (strain Loch Maree / Type A3).